The sequence spans 535 residues: INSYN2B protein (535 aa).

Disordered regions lie at residues 23-85, 215-346, and 360-387; these read LVKQ…SFPR, EARE…RSSS, and KLPS…PRQE. Polar residues predominate over residues 46 to 59; the sequence is KNPTGVTEVNTQTP. Over residues 219-232 the composition is skewed to low complexity; it reads SALSPESSAEESNS. Composition is skewed to polar residues over residues 258-269, 307-319, and 361-375; these read CSNTNSSASNMP, RTHS…SRSQ, and LPSQ…TGVG. Positions 411–448 form a coiled coil; it reads DLQGRLQSVEESLHSNQEKIKVLLNVIQDLEKAHALTE. Residues 493–528 form a disordered region; sequence LEEAEPTEEAPSPPKSPAEAPVPEKQDLRRKSKKVK.

Belongs to the INSYN2 family.

This chain is INSYN2B protein (Insyn2b), found in Mus musculus (Mouse).